The sequence spans 465 residues: tRNA (guanine(37)-N(1))-methyltransferase (465 aa).

S-adenosyl-L-methionine-binding positions include histidine 189, 227-228 (DL), and 255-256 (DA). Residues 283-362 (YPKEGVPANE…GPGPPPSKPW (80 aa)) are disordered. Residues 291 to 320 (NENSSSNGNHNDVREGSQNGANESSVASTT) show a composition bias toward polar residues. Over residues 343 to 352 (TKRRNNKRVR) the composition is skewed to basic residues. Asparagine 371 is a binding site for S-adenosyl-L-methionine.

The protein belongs to the class I-like SAM-binding methyltransferase superfamily. TRM5/TYW2 family. In terms of assembly, monomer.

The protein localises to the mitochondrion matrix. Its subcellular location is the nucleus. It is found in the cytoplasm. The catalysed reaction is guanosine(37) in tRNA + S-adenosyl-L-methionine = N(1)-methylguanosine(37) in tRNA + S-adenosyl-L-homocysteine + H(+). Its function is as follows. Specifically methylates the N1 position of guanosine-37 in various cytoplasmic and mitochondrial tRNAs. Methylation is not dependent on the nature of the nucleoside 5' of the target nucleoside. This is the first step in the biosynthesis of wybutosine (yW), a modified base adjacent to the anticodon of tRNAs and required for accurate decoding. This chain is tRNA (guanine(37)-N(1))-methyltransferase, found in Sorghum bicolor (Sorghum).